A 188-amino-acid chain; its full sequence is dCTP deaminase (188 aa).

Residues 111 to 116, 135 to 137, glutamine 156, tyrosine 170, lysine 179, and glutamine 180 contribute to the dCTP site; these read KSTYAR and TLE. Glutamate 137 (proton donor/acceptor) is an active-site residue.

This sequence belongs to the dCTP deaminase family. As to quaternary structure, homotrimer.

The catalysed reaction is dCTP + H2O + H(+) = dUTP + NH4(+). It functions in the pathway pyrimidine metabolism; dUMP biosynthesis; dUMP from dCTP (dUTP route): step 1/2. Functionally, catalyzes the deamination of dCTP to dUTP. The chain is dCTP deaminase from Rickettsia felis (strain ATCC VR-1525 / URRWXCal2) (Rickettsia azadi).